The primary structure comprises 293 residues: tRNA-cytidine(32) 2-sulfurtransferase (293 aa).

Positions 62 to 67 (SGGKDS) match the PP-loop motif motif. Positions 137, 140, and 228 each coordinate [4Fe-4S] cluster.

This sequence belongs to the TtcA family. In terms of assembly, homodimer. It depends on Mg(2+) as a cofactor. Requires [4Fe-4S] cluster as cofactor.

The protein resides in the cytoplasm. It carries out the reaction cytidine(32) in tRNA + S-sulfanyl-L-cysteinyl-[cysteine desulfurase] + AH2 + ATP = 2-thiocytidine(32) in tRNA + L-cysteinyl-[cysteine desulfurase] + A + AMP + diphosphate + H(+). Its pathway is tRNA modification. In terms of biological role, catalyzes the ATP-dependent 2-thiolation of cytidine in position 32 of tRNA, to form 2-thiocytidine (s(2)C32). The sulfur atoms are provided by the cysteine/cysteine desulfurase (IscS) system. The protein is tRNA-cytidine(32) 2-sulfurtransferase of Brucella melitensis biotype 1 (strain ATCC 23456 / CCUG 17765 / NCTC 10094 / 16M).